The chain runs to 757 residues: Centrosomal protein of 68 kDa (757 aa).

Basic and acidic residues-rich tracts occupy residues 1–17 (MALGEEKAEAEASEDTK) and 86–96 (ANREPVAERSE). Disordered stretches follow at residues 1 to 47 (MALG…RLEA), 67 to 158 (WIGT…PSLA), 192 to 259 (QPSS…GGDA), 311 to 480 (PGPQ…ESDD), 509 to 551 (PTGD…SGDP), and 597 to 618 (LDRWPFSDPDVEGQLPRKGGEQ). Over residues 125–144 (LSSSEEFPQTLSLPRTTTIC) the composition is skewed to polar residues. Low complexity-rich tracts occupy residues 192–206 (QPSSCSISASSTGSS) and 224–240 (VSSSLEPVVPQEPSSVV). Ser332 carries the phosphoserine; by PLK1 modification. Positions 339–355 (FSVSPASTLKSPTNVSP) are enriched in polar residues. Basic and acidic residues-rich tracts occupy residues 405 to 432 (GSRDARWERREPALRGAKDRLTIGKHLD) and 439 to 456 (RTRDRGWPSPRPEREKRT). Positions 457-467 (SQSARRPTCTE) are enriched in polar residues. Residues Ser472 and Ser478 each carry the phosphoserine modification. Low complexity predominate over residues 524 to 543 (SDGPASFPSSSSQSQLPPGA).

As to quaternary structure, interacts with CNTLN; the interaction recruits CEP68 to the centrosome. Interacts with the SCF(FBXW11) complex which contains SKP1, CUL1 and FBXW11; the interaction is probably mediated by FBXW11 and the complex also contains CDK5RAP2 and PCNT. Also interacts with F-box protein BTRC. Interacts with serine/threonine-protein kinase PLK1; the interaction leads to phosphorylation of CEP68 and its subsequent degradation. Interacts with NEK2; the interaction leads to phosphorylation of CEP68. Post-translationally, phosphorylation by PLK1 is required for binding to BTRC in prometaphase. Phosphorylated directly or indirectly by NEK2. NEK2-mediated phosphorylation promotes CEP68 dissociation from the centrosome and its degradation at the onset of mitosis. In terms of processing, ubiquitinated and targeted for proteasomal degradation in early mitosis by the SCF(BTRC) and/or SCF(FBXW11) E3 ubiquitin-protein ligase complexes. Degradation is complete by prometaphase and is required for removal of CDK5RAP2 from the peripheral pericentriolar material and subsequent centriole separation.

The protein localises to the cytoplasm. Its subcellular location is the cytoskeleton. It is found in the microtubule organizing center. The protein resides in the centrosome. In terms of biological role, involved in maintenance of centrosome cohesion, probably as part of a linker structure which prevents centrosome splitting. Required for localization of CDK5RAP2 to the centrosome during interphase. Contributes to CROCC/rootletin filament formation. The polypeptide is Centrosomal protein of 68 kDa (CEP68) (Homo sapiens (Human)).